Here is a 389-residue protein sequence, read N- to C-terminus: Putative F-box protein At1g47790 (389 aa).

The region spanning 19 to 65 (SKPTSSFPLDLASEILLRLPVKSVVRFRCVSKLWSSIITDPYFIKTY) is the F-box domain.

In Arabidopsis thaliana (Mouse-ear cress), this protein is Putative F-box protein At1g47790.